The sequence spans 638 residues: Exocyst complex component EXO70A1 (638 aa).

The tract at residues 163-190 (FDGLPNSLRPSSDGDGGGKPHGGHHNDD) is disordered.

The protein belongs to the EXO70 family. The exocyst complex is composed of SEC3, SEC5, SEC6, SEC8, SEC10, EXO70A1 and EXO84B. Interacts with SEC3A and EXO84B. Co-localizes with FPP3/VETH1, FPP2/VETH2 and COG2 in vesicle-like small motile compartments. May interact with COG2.

The protein localises to the cytoplasm. It is found in the cytosol. It localises to the cytoskeleton. Its subcellular location is the phragmoplast. The protein resides in the cell membrane. The protein localises to the secreted. It is found in the cell wall. In terms of biological role, component of the exocyst complex involved in the docking of exocytic vesicles with fusion sites on the plasma membrane during regulated or polarized secretion. Involved in polarized cell growth and organ morphogenesis. Involved in polarized cell growth and organ morphogenesis. During cytokinesis, involved in cell plate initiation, cell plate maturation and formation of new primary cell wall. Participates in polarized pectin delivery required for the polarized development of the mucilage-producing volcano cells of the seed coat. Involved in the recycling and localization of auxin efflux carriers PIN1 and PIN2, and thus in polar auxin transport regulation. Functions in vesicle trafficking in tracheary elements to regulate patterned secondary cell wall (SCW) thickening. The polypeptide is Exocyst complex component EXO70A1 (Arabidopsis thaliana (Mouse-ear cress)).